We begin with the raw amino-acid sequence, 1565 residues long: Synemin (1565 aa).

Residues 1–10 form a head region; the sequence is MLSWRLQTGP. Residues 11–49 form a coil 1A region; the sequence is EKAELQELNARLYDYVCRVRELERENLLLEEELRGRRGR. The tract at residues 11–320 is interaction with DMD and UTRN; that stretch reads EKAELQELNA…YRALLEGESN (310 aa). Residues 11–322 form the IF rod domain; sequence EKAELQELNA…ALLEGESNPE (312 aa). Positions 50–58 are linker 1; that stretch reads EGLWAEGQA. A coil 1B region spans residues 59–163; the sequence is RCAEEARSLR…ELRARAASLT (105 aa). The segment at 164–186 is linker 12; sequence MHFRARATGPAAPPPRLREVHDS. A coil 2 region spans residues 187–300; it reads YALLVAESWR…LRDYQDLLQV (114 aa). Residues 301–1565 are tail; it reads KTGLSLEVAT…EEEENDGHWF (1265 aa). Residues 401-421 form a disordered region; it reads SGYSSSATTQQENSYGKAVSS. Residues 402-421 show a composition bias toward polar residues; the sequence is GYSSSATTQQENSYGKAVSS. Ser429 is modified (phosphoserine). Residues 472–609 are disordered; the sequence is YRDRRDKVAA…VKDAGGGTGR (138 aa). The segment covering 498 to 577 has biased composition (basic and acidic residues); the sequence is KKTEVKATRE…KEKSVREREV (80 aa). 2 positions are modified to phosphothreonine: Thr598 and Thr651. Residues Ser653 and Ser777 each carry the phosphoserine modification. A compositionally biased stretch (basic and acidic residues) spans 1019-1040; the sequence is LSKDEASEMEKAVESVVRESLS. The disordered stretch occupies residues 1019–1060; the sequence is LSKDEASEMEKAVESVVRESLSRQRSPAPGSPDEEGGAEAPA. Phosphoserine occurs at positions 1044, 1049, 1077, 1087, 1181, and 1184. The tract at residues 1080–1105 is disordered; it reads SEVAGGASHSSGQRTPQGPVSATVEV. The span at 1087 to 1105 shows a compositional bias: polar residues; the sequence is SHSSGQRTPQGPVSATVEV. Residues 1152–1463 form an interaction with TLN1 and VCL region; the sequence is VSAGGDLSQA…GPKETSFTFQ (312 aa). Disordered stretches follow at residues 1198 to 1221 and 1332 to 1415; these read EAWGSPEPGPAESSADMDGSGRHS and QLGE…ETSE. Residues 1244–1563 form an interaction with DMD and UTRN region; it reads GKVGDYFATE…DNEEEENDGH (320 aa). The segment covering 1354 to 1379 has biased composition (polar residues); sequence ATHSHTSGRQTVMTEKSTFQSVVSES. Ser1435 is subject to Phosphoserine. Arg1487 carries the post-translational modification Omega-N-methylarginine. Residues 1505-1525 are disordered; that stretch reads FKASAGEGDQAHREQGKEQAM. Residues 1513 to 1525 show a composition bias toward basic and acidic residues; sequence DQAHREQGKEQAM.

It belongs to the intermediate filament family. As to quaternary structure, interacts with GFAP and VIM. Isoform 1 interacts with TLN1 and VCL. Isoform 2 interacts with DES and DTNA. Isoform 1 and isoform 2 interact with DMD and UTRN. Isoform 2 is strongly detected in adult heart, fetal skeletal muscles and fetal heart. Isoform 1 is weakly detected in fetal heart and also in fetal skeletal muscle. Isoform 1 and isoform 2 are detected in adult bladder (at protein level). The mRNA is predominantly expressed in heart and muscle with some expression in brain which may be due to tissue-specific isoforms.

The protein localises to the cytoplasm. It is found in the cytoskeleton. It localises to the cell junction. The protein resides in the adherens junction. Type-VI intermediate filament (IF) which plays an important cytoskeletal role within the muscle cell cytoskeleton. It forms heteromeric IFs with desmin and/or vimentin, and via its interaction with cytoskeletal proteins alpha-dystrobrevin, dystrophin, talin-1, utrophin and vinculin, is able to link these heteromeric IFs to adherens-type junctions, such as to the costameres, neuromuscular junctions, and myotendinous junctions within striated muscle cells. This Homo sapiens (Human) protein is Synemin.